Reading from the N-terminus, the 223-residue chain is Dephospho-CoA kinase (223 aa).

The 202-residue stretch at 3–204 (VFGLSGGAGS…AGRHRFRVAR (202 aa)) folds into the DPCK domain. Residue 11–16 (GSGKST) coordinates ATP.

This sequence belongs to the CoaE family.

It is found in the cytoplasm. The enzyme catalyses 3'-dephospho-CoA + ATP = ADP + CoA + H(+). Its pathway is cofactor biosynthesis; coenzyme A biosynthesis; CoA from (R)-pantothenate: step 5/5. Functionally, catalyzes the phosphorylation of the 3'-hydroxyl group of dephosphocoenzyme A to form coenzyme A. This chain is Dephospho-CoA kinase, found in Anaplasma marginale (strain St. Maries).